We begin with the raw amino-acid sequence, 209 residues long: MTRHSLPPIQGLYAITPDETDTSRLVTISEAVLAGGAGALQYRNKRVSGTQASNQAGALLDLCRRFQTPLIINDDVQLAAALDADGVHLGIDDGDIAAARAALGPDKIIGASCYNNLALARQAASLGADYVAFGACFPSSTKPDAPRADIALFAKARELGLPIVAIGGITLDNAAGIISAGADAVAVIGALWTAADIEARARQFHQLFN.

4-amino-2-methyl-5-(diphosphooxymethyl)pyrimidine contacts are provided by residues 41 to 45 (QYRNK) and N73. Residues D74 and D93 each contribute to the Mg(2+) site. S112 contributes to the 4-amino-2-methyl-5-(diphosphooxymethyl)pyrimidine binding site. Residue 139 to 141 (SST) coordinates 2-[(2R,5Z)-2-carboxy-4-methylthiazol-5(2H)-ylidene]ethyl phosphate. K142 serves as a coordination point for 4-amino-2-methyl-5-(diphosphooxymethyl)pyrimidine. A 2-[(2R,5Z)-2-carboxy-4-methylthiazol-5(2H)-ylidene]ethyl phosphate-binding site is contributed by G168.

Belongs to the thiamine-phosphate synthase family. Requires Mg(2+) as cofactor.

It catalyses the reaction 2-[(2R,5Z)-2-carboxy-4-methylthiazol-5(2H)-ylidene]ethyl phosphate + 4-amino-2-methyl-5-(diphosphooxymethyl)pyrimidine + 2 H(+) = thiamine phosphate + CO2 + diphosphate. The catalysed reaction is 2-(2-carboxy-4-methylthiazol-5-yl)ethyl phosphate + 4-amino-2-methyl-5-(diphosphooxymethyl)pyrimidine + 2 H(+) = thiamine phosphate + CO2 + diphosphate. It carries out the reaction 4-methyl-5-(2-phosphooxyethyl)-thiazole + 4-amino-2-methyl-5-(diphosphooxymethyl)pyrimidine + H(+) = thiamine phosphate + diphosphate. Its pathway is cofactor biosynthesis; thiamine diphosphate biosynthesis; thiamine phosphate from 4-amino-2-methyl-5-diphosphomethylpyrimidine and 4-methyl-5-(2-phosphoethyl)-thiazole: step 1/1. In terms of biological role, condenses 4-methyl-5-(beta-hydroxyethyl)thiazole monophosphate (THZ-P) and 2-methyl-4-amino-5-hydroxymethyl pyrimidine pyrophosphate (HMP-PP) to form thiamine monophosphate (TMP). This chain is Thiamine-phosphate synthase, found in Methylobacillus flagellatus (strain ATCC 51484 / DSM 6875 / VKM B-1610 / KT).